Consider the following 386-residue polypeptide: Paralemmin-1 (386 aa).

Residues 4-115 (VEANTLQQER…TKENLAEAAA (112 aa)) adopt a coiled-coil conformation. Disordered regions lie at residues 21-40 (RKRQTEIENKRRQLEDDRRQ), 51-149 (ERWL…PMKA), 240-290 (EATA…TMIF), and 321-378 (DAES…AKKQ). 2 stretches are compositionally biased toward basic and acidic residues: residues 24–40 (QTEIENKRRQLEDDRRQ) and 68–95 (AMKKQMQEDEVKTKELEETIQRLERELE). The span at 97-116 (LENSSSVTSTKENLAEAAAP) shows a compositional bias: low complexity. Composition is skewed to basic and acidic residues over residues 259–282 (PRREITGLQAKPRENSTEGAEPSR), 322–334 (AESKAEPEGKDHA), and 365–377 (EAKEAEPDMDAKK). S-palmitoyl cysteine attachment occurs at residues Cys-380 and Cys-382. Cys-383 carries the cysteine methyl ester modification. Cys-383 carries S-farnesyl cysteine lipidation. The propeptide at 384-386 (TVM) is removed in mature form.

It belongs to the paralemmin family. As to quaternary structure, interacts with dopamine receptor DRD3. In terms of processing, phosphorylated. Expressed in the lens (at protein level). Highly expressed in forebrain and cerebellum with lower expression in adrenal gland and heart. Expression weak or undetectable in other tissues.

It is found in the cell membrane. The protein localises to the cell projection. It localises to the filopodium membrane. The protein resides in the axon. Its subcellular location is the dendrite. It is found in the dendritic spine. The protein localises to the basolateral cell membrane. It localises to the apicolateral cell membrane. Involved in plasma membrane dynamics and cell process formation. Isoform 1 and isoform 2 are necessary for axonal and dendritic filopodia induction, for dendritic spine maturation and synapse formation in a palmitoylation-dependent manner. This Gallus gallus (Chicken) protein is Paralemmin-1 (PALM).